A 208-amino-acid chain; its full sequence is Uracil phosphoribosyltransferase (208 aa).

5-phospho-alpha-D-ribose 1-diphosphate is bound by residues Arg-78, Arg-103, and 130–138; that span reads DPMLATGGS. Uracil-binding positions include Ile-193 and 198–200; that span reads GDA. Residue Asp-199 coordinates 5-phospho-alpha-D-ribose 1-diphosphate.

Belongs to the UPRTase family. Mg(2+) is required as a cofactor.

The enzyme catalyses UMP + diphosphate = 5-phospho-alpha-D-ribose 1-diphosphate + uracil. It functions in the pathway pyrimidine metabolism; UMP biosynthesis via salvage pathway; UMP from uracil: step 1/1. Its activity is regulated as follows. Allosterically activated by GTP. Catalyzes the conversion of uracil and 5-phospho-alpha-D-ribose 1-diphosphate (PRPP) to UMP and diphosphate. This chain is Uracil phosphoribosyltransferase, found in Pectobacterium atrosepticum (strain SCRI 1043 / ATCC BAA-672) (Erwinia carotovora subsp. atroseptica).